Consider the following 135-residue polypeptide: Small ribosomal subunit protein uS8 (135 aa).

This sequence belongs to the universal ribosomal protein uS8 family. Part of the 30S ribosomal subunit. Contacts proteins S5 and S12.

Its function is as follows. One of the primary rRNA binding proteins, it binds directly to 16S rRNA central domain where it helps coordinate assembly of the platform of the 30S subunit. In Corynebacterium urealyticum (strain ATCC 43042 / DSM 7109), this protein is Small ribosomal subunit protein uS8.